Here is a 293-residue protein sequence, read N- to C-terminus: AKT-interacting protein (293 aa).

Over residues 1–11 (MNPFWSMSTNA) the composition is skewed to polar residues. Residues 1–44 (MNPFWSMSTNAGRKRSDGEEQSGSGEQRASPARPPFGKKQLPSI) are disordered. Residues 75-223 (YLEYSLLAEF…VVDSVKLCNS (149 aa)) enclose the UBC core domain. The disordered stretch occupies residues 260–293 (RPEDFNKGLPVSGLSWVKPGSTQPFSKEDNPLQT).

It belongs to the ubiquitin-conjugating enzyme family. FTS subfamily.

It localises to the cytoplasm. The protein localises to the cell membrane. In terms of biological role, may function to promote vesicle trafficking and/or fusion. May also regulate apoptosis. The chain is AKT-interacting protein (aktip) from Danio rerio (Zebrafish).